We begin with the raw amino-acid sequence, 306 residues long: GTP-binding protein RAD (306 aa).

Over residues 1 to 13 (MTLNGGSGAGGSR) the composition is skewed to gly residues. The segment at 1-91 (MTLNGGSGAG…GDSGSEDGVY (91 aa)) is disordered. Residue Arg23 is modified to Omega-N-methylarginine. At Ser25 the chain carries Phosphoserine. The segment covering 56-88 (AATAAGTRTQGQRLDWPEGSSDSLSSGDSGSED) has biased composition (low complexity). Residues 97–104 (GAPGVGKS) and 201–204 (NKSD) each bind GTP. The interval 276-295 (AKLFLGRIVARNSRKMAFLA) is calmodulin-binding.

It belongs to the small GTPase superfamily. RGK family. As to quaternary structure, interacts with Calmodulin preferentially in the inactive, GDP-bound form. Interacts with CAMK2D. Interacts with CACNB2; interaction may be involved in beta-adrenergic regulation of heart rate and contractile force. Interaction with CACNB2 regulates the trafficking of CACNA1C to the cell membrane.

It is found in the cell membrane. Functionally, may regulate basal voltage-dependent L-type Ca(2+) currents and be required for beta-adrenergic augmentation of Ca(2+) influx in cardiomyocytes, thereby regulating increases in heart rate and contractile force. May play an important role in cardiac antiarrhythmia via the strong suppression of voltage-dependent L-type Ca(2+) currents. Regulates voltage-gated L-type calcium channel subunit alpha-1C trafficking to the cell membrane. Inhibits cardiac hypertrophy through the calmodulin-dependent kinase II (CaMKII) pathway. Inhibits phosphorylation and activation of CAMK2D. This Rattus norvegicus (Rat) protein is GTP-binding protein RAD (Rrad).